The following is a 487-amino-acid chain: Probable cobyric acid synthase (487 aa).

Residues leucine 246–alanine 431 form the GATase cobBQ-type domain. Cysteine 325 acts as the Nucleophile in catalysis. The active site involves histidine 423.

It belongs to the CobB/CobQ family. CobQ subfamily.

It participates in cofactor biosynthesis; adenosylcobalamin biosynthesis. Functionally, catalyzes amidations at positions B, D, E, and G on adenosylcobyrinic A,C-diamide. NH(2) groups are provided by glutamine, and one molecule of ATP is hydrogenolyzed for each amidation. The chain is Probable cobyric acid synthase from Methanosphaerula palustris (strain ATCC BAA-1556 / DSM 19958 / E1-9c).